The primary structure comprises 280 residues: Fructose-1,6-bisphosphatase class 1 (280 aa).

Positions 64, 83, 85, and 86 each coordinate Mg(2+). Substrate-binding positions include 86–89 (DGSS), Tyr-189, and Lys-220. Glu-226 contacts Mg(2+).

It belongs to the FBPase class 1 family. In terms of assembly, homotetramer. Mg(2+) serves as cofactor.

Its subcellular location is the cytoplasm. It catalyses the reaction beta-D-fructose 1,6-bisphosphate + H2O = beta-D-fructose 6-phosphate + phosphate. It functions in the pathway carbohydrate biosynthesis; gluconeogenesis. This chain is Fructose-1,6-bisphosphatase class 1, found in Campylobacter jejuni subsp. doylei (strain ATCC BAA-1458 / RM4099 / 269.97).